The chain runs to 2528 residues: Highly reducing polyketide synthase pspA (2528 aa).

The segment at 1–53 is disordered; sequence MLAQDVEFVDLPPPEATAGAATTDNETSSFNSNPVPTPSEASSIGPPHQLPVP. The segment covering 24–42 has biased composition (polar residues); the sequence is DNETSSFNSNPVPTPSEAS. The Ketosynthase family 3 (KS3) domain maps to 63-483; that stretch reads VEPMAICGMA…GSNAHVLLGS (421 aa). Residues Cys235, His371, and His406 each act as for beta-ketoacyl synthase activity in the active site. A malonyl-CoA:ACP transacylase (MAT) domain region spans residues 590–909; sequence TFTGQGAQWA…HKDLLKAVGE (320 aa). Positions 961-1089 are N-terminal hotdog fold; it reads HDILGSRVLE…GQVCAGSDRE (129 aa). The dehydratase (DH) domain stretch occupies residues 961–1230; the sequence is HDILGSRVLE…VSNGHVTIDI (270 aa). The PKS/mFAS DH domain occupies 961–1244; it reads HDILGSRVLE…MSAIGDAADA (284 aa). His993 serves as the catalytic Proton acceptor; for dehydratase activity. Residues 1099-1244 form a C-terminal hotdog fold region; it reads PRQLSRRGWY…MSAIGDAADA (146 aa). The Proton donor; for dehydratase activity role is filled by Asp1160. The interval 1409–1587 is methyltransferase (CMet) domain; that stretch reads VFLELLAHRK…GFSGINLVSH (179 aa). Residues 1803-2119 form an enoyl reductase (ER) (ER) domain region; the sequence is GLVDTLCWKS…RGQHIGKIVI (317 aa). Residues 2143–2322 are ketoreductase (KR) domain; it reads RAYLFVGGLG…ASTVNIGVIQ (180 aa). A Carrier domain is found at 2447-2525; sequence ETAELLAGEI…DLGVLAQKKL (79 aa). Ser2485 bears the O-(pantetheine 4'-phosphoryl)serine mark.

The catalysed reaction is 9 malonyl-CoA + acetyl-CoA + S-adenosyl-L-methionine + 13 NADPH + 20 H(+) = soppiline A + S-adenosyl-L-homocysteine + 9 CO2 + 13 NADP(+) + 10 CoA + 7 H2O. The protein operates within secondary metabolite biosynthesis. Highly reducing polyketide synthase; part of the gene cluster that mediates the biosynthesis of the alkylresorcinols called soppilines. The biosynthesis starts with the HR-PKS pspA-catalyzed carbon chain assembly through nine chain elongation cycles, using acetyl CoA and malonyl CoA as a starter and extender units, respectively, to produce the polyketide soppiline A. In the first round, the KR, DH, and CMeT domains work to produce 2-methyl-2-butenyl thioester. In rounds 2 to 5, the KR, DH, and ER domains fully catalyze the reduction of the elongated beta-ketothioester, resulting in the insertion of eight methylene units. The unusual Z,E,Z-triene motif is likely constructed during rounds 6 to 8. Typically, the DH domain introduces a double bond at an alpha,beta-position of an elongated polyketide chain, with the dehydration of a beta-hydroxy group. The last extension cycle would be carried out with L-oriented beta-ketoreduction by the KR domain to produce beta-hydroxy carboxylic acid soppiline A. The type III PKS pspB intercepts the elongated polyketide chain at round 8 from the HR-PKS pspA, followed by a tri-keto extension and decarboxylative aldol cyclization to produce 1,3,5-trisubstituted alkylresorcinol soppiline B. Subsequently, the cytochrome P450 monooxygenase pspC catalyzes three-step oxidations at the C-4 methyl group to carboxylic acid to yield soppiline C. This Penicillium soppii protein is Highly reducing polyketide synthase pspA.